The primary structure comprises 417 residues: Putative competence-damage inducible protein (417 aa).

The protein belongs to the CinA family.

In Oceanobacillus iheyensis (strain DSM 14371 / CIP 107618 / JCM 11309 / KCTC 3954 / HTE831), this protein is Putative competence-damage inducible protein.